We begin with the raw amino-acid sequence, 593 residues long: Cyclin-dependent kinase-like 3 (593 aa).

Residues 4-286 (YETLGKVGEG…STDLLHHDYF (283 aa)) form the Protein kinase domain. ATP contacts are provided by residues 10–18 (VGEGSYGTV) and Lys-33. Positions 45–51 (KIATREI) match the [NKR]KIAxRE motif. Asp-125 acts as the Proton acceptor in catalysis. A Phosphothreonine modification is found at Thr-158. At Tyr-160 the chain carries Phosphotyrosine. A compositionally biased stretch (basic and acidic residues) spans 368–403 (GKGDVPDLKKTESEGEHRQQGTAEDTHPTSLDRKPS). The interval 368–512 (GKGDVPDLKK…NDQIASGNKR (145 aa)) is disordered. Residues 436–452 (NLTSSNLLAANPSSNLS) show a composition bias toward low complexity. Composition is skewed to polar residues over residues 468-491 (SSQT…QVQT) and 499-508 (RTGQNDQIAS).

The protein belongs to the protein kinase superfamily. CMGC Ser/Thr protein kinase family. CDC2/CDKX subfamily. As to expression, highly expressed in brain, and to a lower extent in heart and testis.

Its subcellular location is the nucleus. The protein resides in the cytoplasm. It carries out the reaction L-seryl-[protein] + ATP = O-phospho-L-seryl-[protein] + ADP + H(+). The catalysed reaction is L-threonyl-[protein] + ATP = O-phospho-L-threonyl-[protein] + ADP + H(+). The sequence is that of Cyclin-dependent kinase-like 3 from Rattus norvegicus (Rat).